The sequence spans 160 residues: Cell cycle regulator of non-homologous end joining (160 aa).

The residue at position 1 (Met1) is an N-acetylmethionine. Residues Met1–Gly21 carry the KBM motif. The interval Lys78–Lys152 is disordered. Over residues Glu99 to Ser109 the composition is skewed to low complexity. An XLM motif is present at residues Glu150 to Ser160.

As to quaternary structure, interacts (via KBM motif) with XRCC5/Ku80 and XRCC6/Ku70 heterodimer. Interacts (via XLF motif) with TRIM28/KAP1, ATM, MRE11, NBN and RAD50. Interacts with splicing factor SF3B1. Interacts with ERCC6L2; this interaction is DNA independent.

Its subcellular location is the cytoplasm. It is found in the nucleus. It localises to the chromosome. Its function is as follows. Cell-cycle-specific regulator of classical non-homologous end joining (NHEJ) of DNA double-strand break (DSB) repair, which can act both as an activator or inhibitor of NHEJ, depending on the cell cycle phase. Acts as a regulator of DNA repair pathway choice by specifically inhibiting classical NHEJ during the S and G2 phases, thereby promoting error-free repair by homologous recombination during cell cycle phases when sister chromatids are present. Preferentially protects single-stranded overhangs at break sites by inhibiting classical NHEJ, thereby creating a local environment that favors homologous recombination. Acts via interaction with XRCC5/Ku80 and XRCC6/Ku70. In contrast, acts as an activator of NHEJ during G1 phase of the cell cycle: promotes classical NHEJ in G1 phase cells via multivalent interactions that increase the affinity of DNA damage response proteins for DSB-associated chromatin. Also involved in immunoglobulin V(D)J recombination. May also act as an indirect regulator of proteasome. The polypeptide is Cell cycle regulator of non-homologous end joining (Rattus norvegicus (Rat)).